The primary structure comprises 690 residues: Protease 2 (690 aa).

Active-site charge relay system residues include serine 534, aspartate 619, and histidine 654.

It belongs to the peptidase S9A family.

The enzyme catalyses Hydrolysis of -Arg-|-Xaa- and -Lys-|-Xaa- bonds in oligopeptides, even when P1' residue is proline.. In terms of biological role, cleaves peptide bonds on the C-terminal side of lysyl and argininyl residues. The polypeptide is Protease 2 (ptrB) (Moraxella lacunata).